The sequence spans 345 residues: Phosphoribosylformylglycinamidine cyclo-ligase (345 aa).

It belongs to the AIR synthase family.

It localises to the cytoplasm. It catalyses the reaction 2-formamido-N(1)-(5-O-phospho-beta-D-ribosyl)acetamidine + ATP = 5-amino-1-(5-phospho-beta-D-ribosyl)imidazole + ADP + phosphate + H(+). The protein operates within purine metabolism; IMP biosynthesis via de novo pathway; 5-amino-1-(5-phospho-D-ribosyl)imidazole from N(2)-formyl-N(1)-(5-phospho-D-ribosyl)glycinamide: step 2/2. The protein is Phosphoribosylformylglycinamidine cyclo-ligase of Escherichia coli (strain 55989 / EAEC).